We begin with the raw amino-acid sequence, 345 residues long: Phosphoribosylformylglycinamidine cyclo-ligase (345 aa).

Belongs to the AIR synthase family.

Its subcellular location is the cytoplasm. It carries out the reaction 2-formamido-N(1)-(5-O-phospho-beta-D-ribosyl)acetamidine + ATP = 5-amino-1-(5-phospho-beta-D-ribosyl)imidazole + ADP + phosphate + H(+). Its pathway is purine metabolism; IMP biosynthesis via de novo pathway; 5-amino-1-(5-phospho-D-ribosyl)imidazole from N(2)-formyl-N(1)-(5-phospho-D-ribosyl)glycinamide: step 2/2. The chain is Phosphoribosylformylglycinamidine cyclo-ligase from Actinobacillus succinogenes (strain ATCC 55618 / DSM 22257 / CCUG 43843 / 130Z).